The sequence spans 479 residues: MPRFVDRVVIHTRAGSGGNGCASVHREKFKPLGGPDGGNGGRGGSIVFVVDPQVHTLLDFHFRPHLTAASGKHGMGNNRDGAAGADLEVKVPEGTVVLDENGRLLADLVGAGTRFEAAAGGRGGLGNAALASRVRKAPGFALLGEKGQSRDLTLELKTVADVGLVGFPSAGKSSLVSAISAAKPKIADYPFTTLVPNLGVVSAGEHAFTVADVPGLIPGASRGRGLGLDFLRHIERCAVLVHVVDCATAEPGRDPISDIDALETELACYTPTLQGDAALGDLAARPRAVVLNKIDVPEARELAEFVRDDIAQRGWPVFCVSTATRENLQPLIFGLSQMISDYNAARPVAVPRRPVIRPIPVDDSGFTVEPDGHGGFVVSGARPERWIDQTNFDNDEAVGYLADRLARLGVEEELLRLGARSGCAVTIGEMTFDWEPQTPAGEPVAMSGRGTDPRLDSNKRVGAAERKAARSRRREHGDG.

Residues 2–159 (PRFVDRVVIH…RDLTLELKTV (158 aa)) enclose the Obg domain. The OBG-type G domain maps to 160–340 (ADVGLVGFPS…LIFGLSQMIS (181 aa)). Residues 166–173 (GFPSAGKS), 191–195 (FTTLV), 212–215 (DVPG), 292–295 (NKID), and 321–323 (STA) each bind GTP. The Mg(2+) site is built by S173 and T193. In terms of domain architecture, OCT spans 358–436 (PIPVDDSGFT…IGEMTFDWEP (79 aa)). Positions 434–479 (WEPQTPAGEPVAMSGRGTDPRLDSNKRVGAAERKAARSRRREHGDG) are disordered. A compositionally biased stretch (basic and acidic residues) spans 451–468 (TDPRLDSNKRVGAAERKA). Basic residues predominate over residues 469–479 (ARSRRREHGDG).

It belongs to the TRAFAC class OBG-HflX-like GTPase superfamily. OBG GTPase family. Monomer. The cofactor is Mg(2+).

The protein resides in the cytoplasm. Functionally, an essential GTPase which binds GTP, GDP and possibly (p)ppGpp with moderate affinity, with high nucleotide exchange rates and a fairly low GTP hydrolysis rate. Plays a role in control of the cell cycle, stress response, ribosome biogenesis and in those bacteria that undergo differentiation, in morphogenesis control. The polypeptide is GTPase Obg (Mycobacterium tuberculosis (strain ATCC 25177 / H37Ra)).